A 112-amino-acid polypeptide reads, in one-letter code: MNATILVKIITPLSIALEKQAKIVTMSGEEGMFGVLPSHVPMIVSLKAGLVQVYIDDMHKSENTYLISGGVTEVTANYINIATETAINVTNLSEAEIATKLLDLQKTLSDQH.

The protein belongs to the ATPase epsilon chain family. In terms of assembly, F-type ATPases have 2 components, CF(1) - the catalytic core - and CF(0) - the membrane proton channel. CF(1) has five subunits: alpha(3), beta(3), gamma(1), delta(1), epsilon(1). CF(0) has three main subunits: a, b and c.

Its subcellular location is the cell inner membrane. Its function is as follows. Produces ATP from ADP in the presence of a proton gradient across the membrane. The protein is ATP synthase epsilon chain of Rickettsia rickettsii (strain Sheila Smith).